We begin with the raw amino-acid sequence, 165 residues long: 6,7-dimethyl-8-ribityllumazine synthase (165 aa).

5-amino-6-(D-ribitylamino)uracil contacts are provided by residues phenylalanine 24, 62-64 (AFE), and 86-88 (AVI). 91 to 92 (DT) provides a ligand contact to (2S)-2-hydroxy-3-oxobutyl phosphate. Histidine 94 functions as the Proton donor in the catalytic mechanism. Phenylalanine 119 serves as a coordination point for 5-amino-6-(D-ribitylamino)uracil. Arginine 133 is a binding site for (2S)-2-hydroxy-3-oxobutyl phosphate.

This sequence belongs to the DMRL synthase family.

The enzyme catalyses (2S)-2-hydroxy-3-oxobutyl phosphate + 5-amino-6-(D-ribitylamino)uracil = 6,7-dimethyl-8-(1-D-ribityl)lumazine + phosphate + 2 H2O + H(+). It participates in cofactor biosynthesis; riboflavin biosynthesis; riboflavin from 2-hydroxy-3-oxobutyl phosphate and 5-amino-6-(D-ribitylamino)uracil: step 1/2. In terms of biological role, catalyzes the formation of 6,7-dimethyl-8-ribityllumazine by condensation of 5-amino-6-(D-ribitylamino)uracil with 3,4-dihydroxy-2-butanone 4-phosphate. This is the penultimate step in the biosynthesis of riboflavin. The polypeptide is 6,7-dimethyl-8-ribityllumazine synthase (Prochlorococcus marinus (strain MIT 9303)).